The sequence spans 294 residues: Acetylglutamate kinase (294 aa).

Residues 60-61 (GG), Arg82, and Asn186 each bind substrate.

Belongs to the acetylglutamate kinase family. ArgB subfamily.

It is found in the cytoplasm. It carries out the reaction N-acetyl-L-glutamate + ATP = N-acetyl-L-glutamyl 5-phosphate + ADP. Its pathway is amino-acid biosynthesis; L-arginine biosynthesis; N(2)-acetyl-L-ornithine from L-glutamate: step 2/4. Catalyzes the ATP-dependent phosphorylation of N-acetyl-L-glutamate. The polypeptide is Acetylglutamate kinase (Methanospirillum hungatei JF-1 (strain ATCC 27890 / DSM 864 / NBRC 100397 / JF-1)).